Reading from the N-terminus, the 216-residue chain is Dimethylamine corrinoid protein 2 (216 aa).

Positions 1–91 (MASKEELLQE…EMPAGTETKK (91 aa)) constitute a B12-binding N-terminal domain. Residues 92 to 216 (LGVIVNGTVE…AKAKELLLGK (125 aa)) form the B12-binding domain. Methylcob(III)alamin is bound at residue H105.

Belongs to the methylamine corrinoid protein family.

It participates in one-carbon metabolism; methanogenesis from dimethylamine. In terms of biological role, acts as a methyl group carrier between MtbB and MtbA. The sequence is that of Dimethylamine corrinoid protein 2 (mtbC2) from Methanosarcina acetivorans (strain ATCC 35395 / DSM 2834 / JCM 12185 / C2A).